The chain runs to 273 residues: 4-hydroxy-tetrahydrodipicolinate reductase (273 aa).

NAD(+)-binding positions include Gly12 to Met17 and Glu38. An NADP(+)-binding site is contributed by Arg39. NAD(+) contacts are provided by residues Gly102–Thr104 and Ala126–Phe129. Residue His159 is the Proton donor/acceptor of the active site. His160 lines the (S)-2,3,4,5-tetrahydrodipicolinate pocket. Lys163 serves as the catalytic Proton donor. Gly169–Thr170 contacts (S)-2,3,4,5-tetrahydrodipicolinate.

The protein belongs to the DapB family. In terms of assembly, homotetramer.

It is found in the cytoplasm. The enzyme catalyses (S)-2,3,4,5-tetrahydrodipicolinate + NAD(+) + H2O = (2S,4S)-4-hydroxy-2,3,4,5-tetrahydrodipicolinate + NADH + H(+). The catalysed reaction is (S)-2,3,4,5-tetrahydrodipicolinate + NADP(+) + H2O = (2S,4S)-4-hydroxy-2,3,4,5-tetrahydrodipicolinate + NADPH + H(+). The protein operates within amino-acid biosynthesis; L-lysine biosynthesis via DAP pathway; (S)-tetrahydrodipicolinate from L-aspartate: step 4/4. Functionally, catalyzes the conversion of 4-hydroxy-tetrahydrodipicolinate (HTPA) to tetrahydrodipicolinate. The sequence is that of 4-hydroxy-tetrahydrodipicolinate reductase from Klebsiella pneumoniae (strain 342).